Consider the following 440-residue polypeptide: Branched-chain amino acid permease BrnQ (440 aa).

The next 12 membrane-spanning stretches (helical) occupy residues 9–29 (YIII…NLIF), 46–66 (AGFL…FVFS), 80–100 (PVFG…FFAI), 121–141 (SPVS…LLSL), 149–169 (IVGK…VAVA), 196–216 (GYLT…VNAL), 227–247 (LIVV…VMYT), 284–304 (ILLG…LITA), 321–341 (IAVV…TQLI), 348–368 (LLTM…HSVF), 378–398 (SLLF…GIKI), and 414–434 (IGLG…ILSI).

This sequence belongs to the branched chain amino acid transporter family.

The protein resides in the cell membrane. In terms of biological role, branched-chain amino acid transport system which is involved in the uptake of isoleucine and valine. Probably does not transport leucine. Together with BcaP and BraB, plays an important role in the activation of CodY, a branched-chain amino acid-responsive transcriptional regulator that controls the expression of several dozen transcription units in B.subtilis. This is Branched-chain amino acid permease BrnQ from Bacillus subtilis (strain 168).